The following is a 142-amino-acid chain: Hdr-like menaquinol oxidoreductase cytochrome c subunit (142 aa).

The Cytoplasmic segment spans residues 1–6; that stretch reads MYNKKY. Residues 7–27 traverse the membrane as a helical segment; the sequence is VIPLILVFLIGFFTPYWYNAM. Topologically, residues 28–142 are extracellular; the sequence is AGTLGHVPTL…GIEELSKYFS (115 aa). Cys93, Cys96, His97, Cys104, Cys107, His108, Cys117, Cys120, and His121 together coordinate heme.

In terms of assembly, consists of five subunits: an integral membrane subunit, a cytochrome b-like subunit, a cytochrome c subunit and two iron-sulfur subunits. Binds 3 heme groups per subunit.

The protein localises to the cell membrane. Has menaquinol-oxidizing activity. HmeA, HmeB and HmeE subunits may together catalyze electron transfer from menaquinol to cytochrome c. The sequence is that of Hdr-like menaquinol oxidoreductase cytochrome c subunit (hmeE) from Archaeoglobus fulgidus (strain ATCC 49558 / DSM 4304 / JCM 9628 / NBRC 100126 / VC-16).